The sequence spans 301 residues: Protein FdhE homolog (301 aa).

Belongs to the FdhE family.

The protein resides in the cytoplasm. Its function is as follows. Necessary for formate dehydrogenase activity. The chain is Protein FdhE homolog from Shewanella baltica (strain OS185).